Reading from the N-terminus, the 295-residue chain is 4-hydroxy-tetrahydrodipicolinate synthase (295 aa).

Thr46 is a pyruvate binding site. Catalysis depends on Tyr134, which acts as the Proton donor/acceptor. The active-site Schiff-base intermediate with substrate is Lys162. Position 205 (Ile205) interacts with pyruvate.

It belongs to the DapA family. As to quaternary structure, homotetramer; dimer of dimers.

It is found in the cytoplasm. It carries out the reaction L-aspartate 4-semialdehyde + pyruvate = (2S,4S)-4-hydroxy-2,3,4,5-tetrahydrodipicolinate + H2O + H(+). It functions in the pathway amino-acid biosynthesis; L-lysine biosynthesis via DAP pathway; (S)-tetrahydrodipicolinate from L-aspartate: step 3/4. Functionally, catalyzes the condensation of (S)-aspartate-beta-semialdehyde [(S)-ASA] and pyruvate to 4-hydroxy-tetrahydrodipicolinate (HTPA). This Anaeromyxobacter sp. (strain Fw109-5) protein is 4-hydroxy-tetrahydrodipicolinate synthase.